Reading from the N-terminus, the 738-residue chain is 1,4-alpha-glucan branching enzyme GlgB (738 aa).

Aspartate 417 acts as the Nucleophile in catalysis. The Proton donor role is filled by glutamate 472.

The protein belongs to the glycosyl hydrolase 13 family. GlgB subfamily. As to quaternary structure, monomer.

It catalyses the reaction Transfers a segment of a (1-&gt;4)-alpha-D-glucan chain to a primary hydroxy group in a similar glucan chain.. It functions in the pathway glycan biosynthesis; glycogen biosynthesis. Functionally, catalyzes the formation of the alpha-1,6-glucosidic linkages in glycogen by scission of a 1,4-alpha-linked oligosaccharide from growing alpha-1,4-glucan chains and the subsequent attachment of the oligosaccharide to the alpha-1,6 position. This Burkholderia pseudomallei (strain 668) protein is 1,4-alpha-glucan branching enzyme GlgB.